Consider the following 498-residue polypeptide: Minor fimbrium subunit Mfa1 (498 aa).

Residues M1–S19 form the signal peptide. The N-palmitoyl cysteine moiety is linked to residue C20. A lipid anchor (S-diacylglycerol cysteine) is attached at C20. Residues C20 to R50 constitute a propeptide that is removed on maturation. Residues S436–Q476 form a disordered region.

It belongs to the bacteroidetes fimbrillin superfamily. FimA/Mfa1 family. Structural component of the fimbrial stalk. Minor fimbriae are composed of a structural subunit, most often Mfa1, and the accessory subunits Mfa3, Mfa4 and Mfa5. Mfa1 interacts with Mfa2; this anchors the fimbrium in the membrane. Fimbrium assembly occurs by linear, head-to-tail oligomerization of fimbrial subunits. This is mediated via insertion of a C-terminal beta-strand from one subunit into a groove in the N-terminal domain of the following subunit.

It localises to the fimbrium. It is found in the cell outer membrane. Structural subunit of the minor fimbriae. These filamentous pili are attached to the cell surface; they mediate biofilm formation, adhesion onto host cells and onto other bacteria that are part of the oral microbiome. They play an important role in invasion of periodontal tissues and are recognized as major virulence factors. Mfa1 orthologs from different strains have highly divergent sequences, and this correlates with pathogenicity. The polypeptide is Minor fimbrium subunit Mfa1 (Porphyromonas gingivalis (Bacteroides gingivalis)).